The following is a 745-amino-acid chain: Jacalin-related lectin 4 (745 aa).

Jacalin-type lectin domains are found at residues Ala2–Pro148, Pro151–Pro294, Ala307–Thr448, Pro451–Arg594, and Ala601–Pro744.

Belongs to the jacalin lectin family.

In Arabidopsis thaliana (Mouse-ear cress), this protein is Jacalin-related lectin 4 (JAL4).